A 356-amino-acid polypeptide reads, in one-letter code: 4-hydroxy-3-methylbut-2-en-1-yl diphosphate synthase (flavodoxin) (356 aa).

C264, C267, C299, and E306 together coordinate [4Fe-4S] cluster.

The protein belongs to the IspG family. [4Fe-4S] cluster serves as cofactor.

It carries out the reaction (2E)-4-hydroxy-3-methylbut-2-enyl diphosphate + oxidized [flavodoxin] + H2O + 2 H(+) = 2-C-methyl-D-erythritol 2,4-cyclic diphosphate + reduced [flavodoxin]. The protein operates within isoprenoid biosynthesis; isopentenyl diphosphate biosynthesis via DXP pathway; isopentenyl diphosphate from 1-deoxy-D-xylulose 5-phosphate: step 5/6. Its function is as follows. Converts 2C-methyl-D-erythritol 2,4-cyclodiphosphate (ME-2,4cPP) into 1-hydroxy-2-methyl-2-(E)-butenyl 4-diphosphate. The polypeptide is 4-hydroxy-3-methylbut-2-en-1-yl diphosphate synthase (flavodoxin) (Campylobacter lari (strain RM2100 / D67 / ATCC BAA-1060)).